A 116-amino-acid chain; its full sequence is Nascent polypeptide-associated complex protein (116 aa).

The NAC-A/B domain occupies 6-70; it reads PKQMKDLERM…AREESKQQQK (65 aa).

The protein belongs to the NAC-alpha family. Homodimer. Interacts with the ribosome. Binds ribosomal RNA.

Its function is as follows. Contacts the emerging nascent chain on the ribosome. This is Nascent polypeptide-associated complex protein from Sulfolobus acidocaldarius (strain ATCC 33909 / DSM 639 / JCM 8929 / NBRC 15157 / NCIMB 11770).